We begin with the raw amino-acid sequence, 531 residues long: Probable cytochrome P450 4e1 (531 aa).

The heme site is built by E307 and C444.

The protein belongs to the cytochrome P450 family. The cofactor is heme.

The protein resides in the endoplasmic reticulum membrane. It is found in the microsome membrane. Its function is as follows. May be involved in the metabolism of insect hormones and in the breakdown of synthetic insecticides. The sequence is that of Probable cytochrome P450 4e1 (Cyp4e1) from Drosophila melanogaster (Fruit fly).